Consider the following 416-residue polypeptide: Putative competence-damage inducible protein (416 aa).

Belongs to the CinA family.

This chain is Putative competence-damage inducible protein, found in Levilactobacillus brevis (strain ATCC 367 / BCRC 12310 / CIP 105137 / JCM 1170 / LMG 11437 / NCIMB 947 / NCTC 947) (Lactobacillus brevis).